Consider the following 237-residue polypeptide: Leucyl/phenylalanyl-tRNA--protein transferase (237 aa).

The protein belongs to the L/F-transferase family.

The protein resides in the cytoplasm. The enzyme catalyses N-terminal L-lysyl-[protein] + L-leucyl-tRNA(Leu) = N-terminal L-leucyl-L-lysyl-[protein] + tRNA(Leu) + H(+). It carries out the reaction N-terminal L-arginyl-[protein] + L-leucyl-tRNA(Leu) = N-terminal L-leucyl-L-arginyl-[protein] + tRNA(Leu) + H(+). It catalyses the reaction L-phenylalanyl-tRNA(Phe) + an N-terminal L-alpha-aminoacyl-[protein] = an N-terminal L-phenylalanyl-L-alpha-aminoacyl-[protein] + tRNA(Phe). Functions in the N-end rule pathway of protein degradation where it conjugates Leu, Phe and, less efficiently, Met from aminoacyl-tRNAs to the N-termini of proteins containing an N-terminal arginine or lysine. The polypeptide is Leucyl/phenylalanyl-tRNA--protein transferase (Aromatoleum aromaticum (strain DSM 19018 / LMG 30748 / EbN1) (Azoarcus sp. (strain EbN1))).